The following is a 313-amino-acid chain: Ribosomal RNA small subunit methyltransferase H (313 aa).

S-adenosyl-L-methionine is bound by residues 35–37, aspartate 55, phenylalanine 80, aspartate 102, and glutamine 109; that span reads GGH.

This sequence belongs to the methyltransferase superfamily. RsmH family.

It is found in the cytoplasm. The enzyme catalyses cytidine(1402) in 16S rRNA + S-adenosyl-L-methionine = N(4)-methylcytidine(1402) in 16S rRNA + S-adenosyl-L-homocysteine + H(+). Its function is as follows. Specifically methylates the N4 position of cytidine in position 1402 (C1402) of 16S rRNA. This is Ribosomal RNA small subunit methyltransferase H from Shewanella loihica (strain ATCC BAA-1088 / PV-4).